A 184-amino-acid polypeptide reads, in one-letter code: Acireductone dioxygenase (184 aa).

His97, His99, Glu103, and His141 together coordinate Fe(2+). The Ni(2+) site is built by His97, His99, Glu103, and His141.

The protein belongs to the acireductone dioxygenase (ARD) family. Monomer. The cofactor is Fe(2+). Requires Ni(2+) as cofactor.

It carries out the reaction 1,2-dihydroxy-5-(methylsulfanyl)pent-1-en-3-one + O2 = 3-(methylsulfanyl)propanoate + CO + formate + 2 H(+). The catalysed reaction is 1,2-dihydroxy-5-(methylsulfanyl)pent-1-en-3-one + O2 = 4-methylsulfanyl-2-oxobutanoate + formate + 2 H(+). It functions in the pathway amino-acid biosynthesis; L-methionine biosynthesis via salvage pathway; L-methionine from S-methyl-5-thio-alpha-D-ribose 1-phosphate: step 5/6. Functionally, catalyzes 2 different reactions between oxygen and the acireductone 1,2-dihydroxy-3-keto-5-methylthiopentene (DHK-MTPene) depending upon the metal bound in the active site. Fe-containing acireductone dioxygenase (Fe-ARD) produces formate and 2-keto-4-methylthiobutyrate (KMTB), the alpha-ketoacid precursor of methionine in the methionine recycle pathway. Ni-containing acireductone dioxygenase (Ni-ARD) produces methylthiopropionate, carbon monoxide and formate, and does not lie on the methionine recycle pathway. This chain is Acireductone dioxygenase, found in Parvibaculum lavamentivorans (strain DS-1 / DSM 13023 / NCIMB 13966).